A 300-amino-acid chain; its full sequence is MELRDLDLNLLVVFNQLLVDRRVSITAENLGLTQPAVSNALKRLRTSLQDPLFVRTHQGMEPTPYAAHLAEPVTSAMHALRNALQHHESFDPLTSERTFTLAMTDIGEIYFMPRLMDVLAHQAPNCVISTVRDSSMSLMQALQNGTVDLAVGLLPNLQTGFFQRRLLQNHYVCLCRKDHPVTREPLTLERFCSYGHVRVIAAGTGHGEVDTYMTRVGIRRDIRLEVPHFAAVGHILQRTDLLATVPIRLADCCVEPFGLSALPHPVVLPEIAINMFWHAKYHKDLANIWLRQLMFDLFTD.

The 58-residue stretch at 6 to 63 (LDLNLLVVFNQLLVDRRVSITAENLGLTQPAVSNALKRLRTSLQDPLFVRTHQGMEPT) folds into the HTH lysR-type domain. The segment at residues 23-42 (VSITAENLGLTQPAVSNALK) is a DNA-binding region (H-T-H motif).

This sequence belongs to the LysR transcriptional regulatory family.

It is found in the cytoplasm. Functionally, regulates the expression of the naphthalene (nahA-F) and salicylate (nahG-M) metabolism genes. The chain is HTH-type transcriptional activator NahR (nahR) from Pseudomonas putida (Arthrobacter siderocapsulatus).